Reading from the N-terminus, the 321-residue chain is Fe-S cluster assembly protein DRE2 (321 aa).

Residues 1–131 are N-terminal SAM-like domain; sequence MERMLLLSPP…KPDFGPENIV (131 aa). A linker region spans residues 132–213; sequence PLKLGKRKPV…EETLLDGEDM (82 aa). Residues cysteine 223, cysteine 234, cysteine 237, and cysteine 239 each coordinate [2Fe-2S] cluster. The interval 223 to 239 is fe-S binding site A; the sequence is CRPKAGKRRRACKDCTC. Residues cysteine 284, cysteine 287, cysteine 295, and cysteine 298 each contribute to the [4Fe-4S] cluster site. Short sequence motifs (cx2C motif) lie at residues 284 to 287 and 295 to 298; these read CGNC and CDGC. The fe-S binding site B stretch occupies residues 284 to 298; it reads CGNCALGDAFRCDGC.

The protein belongs to the anamorsin family. In terms of assembly, monomer. Interacts with TAH18. Interacts with MIA40. [2Fe-2S] cluster is required as a cofactor. It depends on [4Fe-4S] cluster as a cofactor.

Its subcellular location is the cytoplasm. The protein resides in the mitochondrion intermembrane space. Functionally, component of the cytosolic iron-sulfur (Fe-S) protein assembly (CIA) machinery required for the maturation of extramitochondrial Fe-S proteins. Part of an electron transfer chain functioning in an early step of cytosolic Fe-S biogenesis, facilitating the de novo assembly of a [4Fe-4S] cluster on the scaffold complex CFD1-NBP35. Electrons are transferred to DRE2 from NADPH via the FAD- and FMN-containing protein TAH18. TAH18-DRE2 are also required for the assembly of the diferric tyrosyl radical cofactor of ribonucleotide reductase (RNR), probably by providing electrons for reduction during radical cofactor maturation in the catalytic small subunit RNR2. This chain is Fe-S cluster assembly protein DRE2, found in Coccidioides posadasii (strain C735) (Valley fever fungus).